Consider the following 94-residue polypeptide: Co-chaperonin GroES (94 aa).

This sequence belongs to the GroES chaperonin family. In terms of assembly, heptamer of 7 subunits arranged in a ring. Interacts with the chaperonin GroEL.

The protein resides in the cytoplasm. In terms of biological role, together with the chaperonin GroEL, plays an essential role in assisting protein folding. The GroEL-GroES system forms a nano-cage that allows encapsulation of the non-native substrate proteins and provides a physical environment optimized to promote and accelerate protein folding. GroES binds to the apical surface of the GroEL ring, thereby capping the opening of the GroEL channel. This is Co-chaperonin GroES from Orientia tsutsugamushi (Rickettsia tsutsugamushi).